The sequence spans 320 residues: Aspartate carbamoyltransferase catalytic subunit (320 aa).

R68 and T69 together coordinate carbamoyl phosphate. K96 provides a ligand contact to L-aspartate. Carbamoyl phosphate contacts are provided by R118, H148, and Q151. Residues R181 and R236 each coordinate L-aspartate. Carbamoyl phosphate contacts are provided by G277 and P278.

This sequence belongs to the aspartate/ornithine carbamoyltransferase superfamily. ATCase family. As to quaternary structure, heterododecamer (2C3:3R2) of six catalytic PyrB chains organized as two trimers (C3), and six regulatory PyrI chains organized as three dimers (R2).

It catalyses the reaction carbamoyl phosphate + L-aspartate = N-carbamoyl-L-aspartate + phosphate + H(+). Its pathway is pyrimidine metabolism; UMP biosynthesis via de novo pathway; (S)-dihydroorotate from bicarbonate: step 2/3. Functionally, catalyzes the condensation of carbamoyl phosphate and aspartate to form carbamoyl aspartate and inorganic phosphate, the committed step in the de novo pyrimidine nucleotide biosynthesis pathway. This Methylibium petroleiphilum (strain ATCC BAA-1232 / LMG 22953 / PM1) protein is Aspartate carbamoyltransferase catalytic subunit.